The chain runs to 257 residues: RAALQAEIEELRATLEQTERSRKIAEQELLDASERVQLLHTQNASLINAKKKLENDVSQLQSEVEEVIQRARNAEEKAKKAITDAAMMAEELKKEQDTSAHLERMKKNMEQTVKDLQHRLDEAEQLALKGGKKQIQKLEARVRELEGEVENEQKRNAEAVKGLRKHERRVKELTYQTEEDRKNVLRLQDLVDKLQAKVKSYKRQAEEAEEQSNVNLAKFRKLQHELEEAEERADIAESQVNKLRVKSREVHTKISAE.

A coiled-coil region spans residues 1–257 (RAALQAEIEE…REVHTKISAE (257 aa)). Phosphoserine is present on residues Ser33, Ser45, and Ser58.

In terms of assembly, muscle myosin is a hexameric protein that consists of 2 heavy chain subunits (MHC), 2 alkali light chain subunits (MLC) and 2 regulatory light chain subunits (MLC-2).

Its subcellular location is the cytoplasm. It is found in the myofibril. Functionally, muscle contraction. This Rattus norvegicus (Rat) protein is Myosin-8 (Myh8).